The following is a 1292-amino-acid chain: HMG domain-containing protein 3 (1292 aa).

Positions 42–110 form a DNA-binding region, HMG box; it reads TKKPRSAYLL…GLDPNSKLSA (69 aa). 3 disordered regions span residues 363–391, 448–505, and 562–588; these read SKGSVVKRNQQPVTTEQNSSKENASKLTL, VQPE…GRAR, and KQLGQPIQQPSGPGEVKLPSGPSNRTS. The span at 370-391 shows a compositional bias: polar residues; that stretch reads RNQQPVTTEQNSSKENASKLTL. Over residues 467-478 the composition is skewed to low complexity; it reads PTPSEGTSTSSP. Residues 562–572 are compositionally biased toward polar residues; it reads KQLGQPIQQPS.

The protein localises to the nucleus. In Homo sapiens (Human), this protein is HMG domain-containing protein 3.